The following is an 812-amino-acid chain: DNA translocase FtsK 1 (812 aa).

A compositionally biased stretch (basic residues) spans 1–11; it reads MTEKSHKKTAK. The tract at residues 1–36 is disordered; it reads MTEKSHKKTAKGRAGSPSPTSARNKKADNGARGNKV. Basic and acidic residues predominate over residues 25–36; that stretch reads KKADNGARGNKV. A run of 5 helical transmembrane segments spans residues 63–83, 116–136, 156–176, 184–204, and 210–230; these read IGDA…ISLI, VGYY…CVVL, IAAA…YFVL, LPVG…AWLL, and LLII…ISWL. Topologically, residues 231–812 are cytoplasmic; that stretch reads EFLNGAGRAV…RKILAHKDHL (582 aa). A FtsK domain is found at 461 to 670; sequence GTPVVGDLAK…FTVQSKIDSR (210 aa). An ATP-binding site is contributed by 481–486; sequence GSGKSV.

The protein belongs to the FtsK/SpoIIIE/SftA family. As to quaternary structure, homohexamer. Forms a ring that surrounds DNA.

It localises to the cell inner membrane. Its function is as follows. Essential cell division protein that coordinates cell division and chromosome segregation. The N-terminus is involved in assembly of the cell-division machinery. The C-terminus functions as a DNA motor that moves dsDNA in an ATP-dependent manner towards the dif recombination site, which is located within the replication terminus region. Translocation stops specifically at Xer-dif sites, where FtsK interacts with the Xer recombinase, allowing activation of chromosome unlinking by recombination. FtsK orienting polar sequences (KOPS) guide the direction of DNA translocation. FtsK can remove proteins from DNA as it translocates, but translocation stops specifically at XerCD-dif site, thereby preventing removal of XerC and XerD from dif. The protein is DNA translocase FtsK 1 (ftsK1) of Neisseria meningitidis serogroup B (strain ATCC BAA-335 / MC58).